The primary structure comprises 428 residues: Adenylosuccinate synthetase (428 aa).

Residues G12 to K18 and G40 to T42 contribute to the GTP site. Catalysis depends on D13, which acts as the Proton acceptor. Positions 13 and 40 each coordinate Mg(2+). IMP-binding positions include D13–K16, N38–H41, T128, R142, Q223, T238, and R302. H41 functions as the Proton donor in the catalytic mechanism. T298–R304 serves as a coordination point for substrate. GTP-binding positions include R304, S330–D332, and S412–G414.

The protein belongs to the adenylosuccinate synthetase family. In terms of assembly, homodimer. Mg(2+) is required as a cofactor.

The protein resides in the cytoplasm. It carries out the reaction IMP + L-aspartate + GTP = N(6)-(1,2-dicarboxyethyl)-AMP + GDP + phosphate + 2 H(+). It functions in the pathway purine metabolism; AMP biosynthesis via de novo pathway; AMP from IMP: step 1/2. In terms of biological role, plays an important role in the de novo pathway of purine nucleotide biosynthesis. Catalyzes the first committed step in the biosynthesis of AMP from IMP. In Geobacillus kaustophilus (strain HTA426), this protein is Adenylosuccinate synthetase.